The chain runs to 221 residues: MAKAIFITATGTDIGKTYVSGLIAKHMKDKGLNIGYYKAALSGSLDITDSDAWYVKQQADLLDSYDEMVSYTYKHAYSPHLAAQIEGNPPDIKVIKNAYENINKKHDYMIVEGSGGIICPIRYDNNQKIFLEDIIKELNIPSLIIADAGLGTINSAVLTIEYMRSKNLKVNGVILNRFEMANEMHDDNKKMIEEMTGVKIIGIVIDGILKLDEKNIETLFE.

13 to 18 contributes to the ATP binding site; that stretch reads DIGKTY. Mg(2+) is bound at residue Thr-17. Residue Lys-38 is part of the active site. Position 42 (Ser-42) interacts with substrate. ATP-binding positions include Asp-51, 112–115, and 176–177; these read EGSG and NR. The Mg(2+) site is built by Asp-51 and Glu-112.

It belongs to the dethiobiotin synthetase family. As to quaternary structure, homodimer. The cofactor is Mg(2+).

Its subcellular location is the cytoplasm. The catalysed reaction is (7R,8S)-7,8-diammoniononanoate + CO2 + ATP = (4R,5S)-dethiobiotin + ADP + phosphate + 3 H(+). Its pathway is cofactor biosynthesis; biotin biosynthesis; biotin from 7,8-diaminononanoate: step 1/2. Functionally, catalyzes a mechanistically unusual reaction, the ATP-dependent insertion of CO2 between the N7 and N8 nitrogen atoms of 7,8-diaminopelargonic acid (DAPA, also called 7,8-diammoniononanoate) to form a ureido ring. In Brachyspira hyodysenteriae (strain ATCC 49526 / WA1), this protein is ATP-dependent dethiobiotin synthetase BioD.